The chain runs to 148 residues: Putative nickel-responsive regulator (148 aa).

His-88, His-99, His-101, and Cys-107 together coordinate Ni(2+).

The protein belongs to the transcriptional regulatory CopG/NikR family. Ni(2+) serves as cofactor.

Functionally, transcriptional regulator. The chain is Putative nickel-responsive regulator from Helicobacter pylori (strain P12).